A 47-amino-acid polypeptide reads, in one-letter code: Large ribosomal subunit protein bL33 (47 aa).

The protein belongs to the bacterial ribosomal protein bL33 family.

This chain is Large ribosomal subunit protein bL33, found in Staphylococcus xylosus.